Consider the following 151-residue polypeptide: UPF0178 protein PST_0536 (151 aa).

It belongs to the UPF0178 family.

The protein is UPF0178 protein PST_0536 of Stutzerimonas stutzeri (strain A1501) (Pseudomonas stutzeri).